A 114-amino-acid polypeptide reads, in one-letter code: uncharacterized protein (114 aa).

To M.kandleri MK0008.

This is an uncharacterized protein from Methanocaldococcus jannaschii (strain ATCC 43067 / DSM 2661 / JAL-1 / JCM 10045 / NBRC 100440) (Methanococcus jannaschii).